We begin with the raw amino-acid sequence, 482 residues long: Exodeoxyribonuclease 7 large subunit (482 aa).

The disordered stretch occupies residues 457-482 (TLDTGGAPAKPASKPKQKPPEQGSLF).

The protein belongs to the XseA family. Heterooligomer composed of large and small subunits.

The protein localises to the cytoplasm. The catalysed reaction is Exonucleolytic cleavage in either 5'- to 3'- or 3'- to 5'-direction to yield nucleoside 5'-phosphates.. Bidirectionally degrades single-stranded DNA into large acid-insoluble oligonucleotides, which are then degraded further into small acid-soluble oligonucleotides. This is Exodeoxyribonuclease 7 large subunit from Ruegeria pomeroyi (strain ATCC 700808 / DSM 15171 / DSS-3) (Silicibacter pomeroyi).